The following is a 327-amino-acid chain: GMP reductase (327 aa).

Cys175 serves as the catalytic Thioimidate intermediate. 204–227 contributes to the NADP(+) binding site; the sequence is IIADGGIRTHGDVAKSIRFGATMV.

The protein belongs to the IMPDH/GMPR family. GuaC type 2 subfamily.

The enzyme catalyses IMP + NH4(+) + NADP(+) = GMP + NADPH + 2 H(+). Catalyzes the irreversible NADPH-dependent deamination of GMP to IMP. It functions in the conversion of nucleobase, nucleoside and nucleotide derivatives of G to A nucleotides, and in maintaining the intracellular balance of A and G nucleotides. The polypeptide is GMP reductase (Bacillus cereus (strain ATCC 10987 / NRS 248)).